We begin with the raw amino-acid sequence, 497 residues long: Ectonucleoside triphosphate diphosphohydrolase 8 (497 aa).

At 1–8 (MGLSWKER) the chain is on the cytoplasmic side. The helical transmembrane segment at 9-29 (VFMALLGVAAASGLTMLVLIL) threads the bilayer. Residues 30–473 (VKAINVLLPA…AQSYSIWTAG (444 aa)) lie on the Extracellular side of the membrane. A disulfide bridge connects residues C78 and C102. Catalysis depends on E168, which acts as the Proton acceptor. C245 and C294 are oxidised to a cystine. Residue N306 is glycosylated (N-linked (GlcNAc...) asparagine). A disulfide bridge links C331 with C337. N365 carries an N-linked (GlcNAc...) asparagine glycan. C383 and C405 are disulfide-bonded. Residues 474–494 (VVFAVLTLVAILGAAAIQIFW) traverse the membrane as a helical segment. The Cytoplasmic segment spans residues 495 to 497 (TQD).

Belongs to the GDA1/CD39 NTPase family. The cofactor is Ca(2+). It depends on Mg(2+) as a cofactor. Post-translationally, N-glycosylated. Expressed in liver, jejunum and kidney.

The protein resides in the cell membrane. The enzyme catalyses a ribonucleoside 5'-triphosphate + 2 H2O = a ribonucleoside 5'-phosphate + 2 phosphate + 2 H(+). Its function is as follows. Canalicular ectonucleoside NTPDase responsible for the main hepatic NTPDase activity. Ectonucleoside NTPDases catalyze the hydrolysis of gamma- and beta-phosphate residues of nucleotides, playing a central role in concentration of extracellular nucleotides. Has activity toward ATP, ADP, UTP and UDP, but not toward AMP. This Mus musculus (Mouse) protein is Ectonucleoside triphosphate diphosphohydrolase 8 (Entpd8).